The primary structure comprises 590 residues: DEAD-box ATP-dependent RNA helicase 27 (590 aa).

A disordered region spans residues 1 to 92; the sequence is MAPAPATTSS…EKGNEGGSGI (92 aa). Acidic residues predominate over residues 27 to 62; that stretch reads SDSESEELSYDTAAADEEEGEEEAPNQMEELEEEQE. Positions 40 to 87 form a coiled coil; the sequence is AADEEEGEEEAPNQMEELEEEQEEEKKEKKQKKEMSKEKKRKKEKGNE. The span at 63-76 shows a compositional bias: basic and acidic residues; the sequence is EEKKEKKQKKEMSK. The Q motif signature appears at 96–124; it reads MLFSELGVSEPTARAIREMNYTYLTQIQA. Residues 127 to 302 enclose the Helicase ATP-binding domain; sequence IPHLLNGKDV…KLSFEKNEES (176 aa). Position 140-147 (140-147) interacts with ATP; it reads AKTGSGKT. Positions 250-253 match the DEAD box motif; sequence DEAD. The 154-residue stretch at 335–488 folds into the Helicase C-terminal domain; that stretch reads RFLVLYAFLK…NKVPNLQSHL (154 aa). The segment at 551–590 is disordered; it reads SASKHRRKMRKVDGGRRHGISAANPYGRKGGDDKRQFARF. The segment covering 579-590 has biased composition (basic and acidic residues); it reads KGGDDKRQFARF.

It belongs to the DEAD box helicase family. DDX18/HAS1 subfamily.

The catalysed reaction is ATP + H2O = ADP + phosphate + H(+). The sequence is that of DEAD-box ATP-dependent RNA helicase 27 from Oryza sativa subsp. japonica (Rice).